The following is a 420-amino-acid chain: uncharacterized protein (420 aa).

An N-terminal signal peptide occupies residues 1–25 (MRYAMNKIPALLLVGALIIATVASG). Cysteine 26 is subject to N-acetylcysteine. Cysteine 26 carries S-archaeol cysteine lipidation.

Belongs to the bacterial solute-binding protein 1 family.

It is found in the cell membrane. Probably part of a binding-protein-dependent transport system PH1036/38/39. This is an uncharacterized protein from Pyrococcus horikoshii (strain ATCC 700860 / DSM 12428 / JCM 9974 / NBRC 100139 / OT-3).